We begin with the raw amino-acid sequence, 327 residues long: UDP-N-acetylenolpyruvoylglucosamine reductase (327 aa).

Residues 42-223 (RTGGLAELFY…RAAMDEVALH (182 aa)) form the FAD-binding PCMH-type domain. Residue Arg-188 is part of the active site. The active-site Proton donor is the Ser-237. The active site involves Glu-307.

Belongs to the MurB family. Requires FAD as cofactor.

Its subcellular location is the cytoplasm. It carries out the reaction UDP-N-acetyl-alpha-D-muramate + NADP(+) = UDP-N-acetyl-3-O-(1-carboxyvinyl)-alpha-D-glucosamine + NADPH + H(+). The protein operates within cell wall biogenesis; peptidoglycan biosynthesis. Cell wall formation. The chain is UDP-N-acetylenolpyruvoylglucosamine reductase from Bartonella tribocorum (strain CIP 105476 / IBS 506).